The primary structure comprises 403 residues: Tryptophan synthase beta chain (403 aa).

An N6-(pyridoxal phosphate)lysine modification is found at Lys-87.

This sequence belongs to the TrpB family. Tetramer of two alpha and two beta chains. The cofactor is pyridoxal 5'-phosphate.

The enzyme catalyses (1S,2R)-1-C-(indol-3-yl)glycerol 3-phosphate + L-serine = D-glyceraldehyde 3-phosphate + L-tryptophan + H2O. Its pathway is amino-acid biosynthesis; L-tryptophan biosynthesis; L-tryptophan from chorismate: step 5/5. Functionally, the beta subunit is responsible for the synthesis of L-tryptophan from indole and L-serine. This chain is Tryptophan synthase beta chain, found in Shewanella loihica (strain ATCC BAA-1088 / PV-4).